We begin with the raw amino-acid sequence, 146 residues long: Nitric oxide reductase subunit C (146 aa).

A helical; Signal-anchor membrane pass occupies residues 13–29 (IYFGGSVFFILLFLALT). Heme c-binding residues include Cys-61, Cys-64, and His-65.

In terms of assembly, heterodimer of cytochromes b (large subunit) and c (small subunit).

Its subcellular location is the cell membrane. Component of the anaerobic respiratory chain that transforms nitrate to dinitrogen (denitrification). The chain is Nitric oxide reductase subunit C (norC) from Pseudomonas aeruginosa (strain ATCC 15692 / DSM 22644 / CIP 104116 / JCM 14847 / LMG 12228 / 1C / PRS 101 / PAO1).